The primary structure comprises 804 residues: Probable phosphoketolase (804 aa).

The protein belongs to the XFP family. The cofactor is thiamine diphosphate.

The protein is Probable phosphoketolase of Mycolicibacterium paratuberculosis (strain ATCC BAA-968 / K-10) (Mycobacterium paratuberculosis).